The sequence spans 606 residues: Gastrula zinc finger protein XlCGF66.1 (606 aa).

2 disordered regions span residues 1 to 31 (MGMWEEASDTGMKGKKKKKDKNEEEEERGKK) and 240 to 271 (TLHSKDSCNEGHKHLSHKSDYNKHQNPHKRQK). A compositionally biased stretch (basic and acidic residues) spans 242-262 (HSKDSCNEGHKHLSHKSDYNK). 11 consecutive C2H2-type zinc fingers follow at residues 273 to 295 (FSCSKCGKCFSNLTSLHCHQKTH), 300 to 322 (LLCLKCGKCFATSSKLIIHRQTH), 328 to 350 (FSCSECRICFSKQSSLARHQITH), 384 to 407 (DFCSECGKCFATSSQLIAHQQQVH), 413 to 435 (FSCTKCGKCFSYRSRLVRHQRTH), 441 to 464 (YSCSECGKCFASSSHLIGHRQQVH), 470 to 492 (FFCSECGKYFLYQSQLVRHQRTH), 498 to 521 (YSCSECGKCFATSSQLMAHQQQVH), 527 to 549 (FSCSECGKYFLYRAHLVRHQRTH), 555 to 578 (DFCFECGKCFATSLQLIAHQQQVH), and 584 to 606 (FSCSECGKSFLYRSHLARHHRTH).

This sequence belongs to the krueppel C2H2-type zinc-finger protein family.

It is found in the nucleus. In terms of biological role, may be involved in transcriptional regulation. In Xenopus laevis (African clawed frog), this protein is Gastrula zinc finger protein XlCGF66.1.